The sequence spans 743 residues: Type VI secretion system spike protein VgrG1 (743 aa).

It belongs to the VgrG protein family.

It is found in the secreted. It catalyses the reaction L-arginyl-[protein] + NAD(+) = N(omega)-(ADP-D-ribosyl)-L-arginyl-[protein] + nicotinamide + H(+). Part of the type VI secretion system specialized secretion system, which delivers several virulence factors in both prokaryotic and eukaryotic cells during infection. Acts directly as an secreted effector with an actin ADP-ribosyltransferase activity that disrupts the host actin cytoskeleton, leading to a decrease in host cell viability and an increase in apoptosis. This Aeromonas hydrophila subsp. hydrophila (strain ATCC 7966 / DSM 30187 / BCRC 13018 / CCUG 14551 / JCM 1027 / KCTC 2358 / NCIMB 9240 / NCTC 8049) protein is Type VI secretion system spike protein VgrG1 (vgrG1).